We begin with the raw amino-acid sequence, 368 residues long: Glucose 1-dehydrogenase 2 (368 aa).

Cysteine 41 contributes to the Zn(2+) binding site. Threonine 43 lines the substrate pocket. Histidine 68 and glutamate 69 together coordinate Zn(2+). A substrate-binding site is contributed by asparagine 91. 5 residues coordinate Zn(2+): cysteine 95, cysteine 98, cysteine 101, cysteine 109, and glutamine 152. The substrate site is built by glutamine 152 and aspartate 156. NADP(+) contacts are provided by residues 213-215 (NRR), 279-281 (FGF), 307-309 (LDN), and lysine 356. A substrate-binding site is contributed by asparagine 309.

Belongs to the zinc-containing alcohol dehydrogenase family. Glucose 1-dehydrogenase subfamily. It depends on Zn(2+) as a cofactor.

The enzyme catalyses D-glucose + NAD(+) = D-glucono-1,5-lactone + NADH + H(+). It carries out the reaction D-glucose + NADP(+) = D-glucono-1,5-lactone + NADPH + H(+). Functionally, catalyzes the NAD(P)(+)-dependent oxidation of D-glucose to D-gluconate via gluconolactone. Can utilize both NAD(+) and NADP(+) as electron acceptor. Is involved in the degradation of glucose through a non-phosphorylative variant of the Entner-Doudoroff pathway. The chain is Glucose 1-dehydrogenase 2 from Saccharolobus solfataricus (strain ATCC 35092 / DSM 1617 / JCM 11322 / P2) (Sulfolobus solfataricus).